A 283-amino-acid polypeptide reads, in one-letter code: Thymidylate synthase (283 aa).

Arg-22 is a dUMP binding site. Cys-160 functions as the Nucleophile in the catalytic mechanism. DUMP contacts are provided by residues 180–183, Asn-191, and 221–223; these read RSCD and HIY. Asp-183 contributes to the (6R)-5,10-methylene-5,6,7,8-tetrahydrofolate binding site. (6R)-5,10-methylene-5,6,7,8-tetrahydrofolate is bound at residue Ser-282.

It belongs to the thymidylate synthase family. Bacterial-type ThyA subfamily. As to quaternary structure, homodimer.

Its subcellular location is the cytoplasm. It catalyses the reaction dUMP + (6R)-5,10-methylene-5,6,7,8-tetrahydrofolate = 7,8-dihydrofolate + dTMP. It participates in pyrimidine metabolism; dTTP biosynthesis. In terms of biological role, catalyzes the reductive methylation of 2'-deoxyuridine-5'-monophosphate (dUMP) to 2'-deoxythymidine-5'-monophosphate (dTMP) while utilizing 5,10-methylenetetrahydrofolate (mTHF) as the methyl donor and reductant in the reaction, yielding dihydrofolate (DHF) as a by-product. This enzymatic reaction provides an intracellular de novo source of dTMP, an essential precursor for DNA biosynthesis. The protein is Thymidylate synthase of Vibrio cholerae serotype O1 (strain ATCC 39315 / El Tor Inaba N16961).